The sequence spans 285 residues: 4-diphosphocytidyl-2-C-methyl-D-erythritol kinase (285 aa).

Lys10 is an active-site residue. Position 94-104 (94-104 (PVAAGLGGGSS)) interacts with ATP. Asp136 is a catalytic residue.

The protein belongs to the GHMP kinase family. IspE subfamily.

The enzyme catalyses 4-CDP-2-C-methyl-D-erythritol + ATP = 4-CDP-2-C-methyl-D-erythritol 2-phosphate + ADP + H(+). It participates in isoprenoid biosynthesis; isopentenyl diphosphate biosynthesis via DXP pathway; isopentenyl diphosphate from 1-deoxy-D-xylulose 5-phosphate: step 3/6. Catalyzes the phosphorylation of the position 2 hydroxy group of 4-diphosphocytidyl-2C-methyl-D-erythritol. This Latilactobacillus sakei subsp. sakei (strain 23K) (Lactobacillus sakei subsp. sakei) protein is 4-diphosphocytidyl-2-C-methyl-D-erythritol kinase.